A 305-amino-acid polypeptide reads, in one-letter code: Mitochondrial brown fat uncoupling protein 1 (305 aa).

Residues 1–10 (MVGHAATDVP) are Mitochondrial intermembrane-facing. A helical membrane pass occupies residues 11–32 (PTMAVKIFSAGVAACVADIITF). 3 Solcar repeats span residues 11–102 (PTMA…VQEF), 109–199 (ASLG…MKEA), and 208–293 (DDVP…LKRE). At 33–73 (PLDTAKVRLQIQGECLTSSAFRYKGVLGTIITLAKTEGPVK) the chain is on the mitochondrial matrix side. Fatty acid 16:0 is bound at residue lysine 56. The helical transmembrane segment at 74 to 96 (LYSGLPAGLQRQISFASLRIGLY) threads the bilayer. Topologically, residues 97-114 (DTVQEFFTTGKEASLGSK) are mitochondrial intermembrane. The helical transmembrane segment at 115–131 (ISAGLTTGGVAVFIGQP) threads the bilayer. Over 132–176 (TEVVKVRLQAQSHLHGPKPRYTGTYNAYRIIATTEGLTGLWKGTT) the chain is Mitochondrial matrix. The helical transmembrane segment at 177-193 (PNLTRNVIINCTELVTY) threads the bilayer. The Mitochondrial intermembrane segment spans residues 194 to 210 (DLMKEALVKNKLLADDV). The helical transmembrane segment at 211-230 (PCHFVSAVVAGFCTTVLSSP) threads the bilayer. The Mitochondrial matrix segment spans residues 231 to 264 (VDVVKTRFVNSSPGQYTSVPNCAMMMLTREGPSA). Residue cysteine 252 is modified to Cysteine sulfenic acid (-SOH). The chain crosses the membrane as a helical span at residues 265-287 (FFKGFVPSFLRLGSWNIIMFVCF). Residue lysine 267 participates in fatty acid 16:0 binding. Residues 288–305 (EQLKRELMKSRQAMDCAT) lie on the Mitochondrial intermembrane side of the membrane.

Belongs to the mitochondrial carrier (TC 2.A.29) family. In terms of assembly, most probably functions as a monomer. Binds one purine nucleotide per monomer. However, has also been suggested to function as a homodimer or a homotetramer. Tightly associates with cardiolipin in the mitochondrion inner membrane; may stabilize and regulate its activity. Post-translationally, may undergo sulfenylation upon cold exposure. May increase the sensitivity of UCP1 thermogenic function to the activation by noradrenaline probably through structural effects. In terms of processing, may undergo ubiquitin-mediated proteasomal degradation.

It localises to the mitochondrion inner membrane. The enzyme catalyses H(+)(in) = H(+)(out). Has no constitutive proton transporter activity and has to be activated by long-chain fatty acids/LCFAs. Inhibited by purine nucleotides. Both purine nucleotides and LCFAs bind the cytosolic side of the transporter and directly compete to activate or inhibit it. Activated by noradrenaline and reactive oxygen species. Despite lacking canonical translational encoding for selenocysteine, a small pool of the protein has been observed to selectively incorporate selenocysteine at 'Cys-252'. Selenocysteine-modified protein is highly sensitive to redox modification and may constitute a pool of protein highly sensitive to activation by elevated levels of reactive oxygen species (ROS). Functionally, mitochondrial protein responsible for thermogenic respiration, a specialized capacity of brown adipose tissue and beige fat that participates in non-shivering adaptive thermogenesis to temperature and diet variations and more generally to the regulation of energy balance. Functions as a long-chain fatty acid/LCFA and proton symporter, simultaneously transporting one LCFA and one proton through the inner mitochondrial membrane. However, LCFAs remaining associated with the transporter via their hydrophobic tails, it results in an apparent transport of protons activated by LCFAs. Thereby, dissipates the mitochondrial proton gradient and converts the energy of substrate oxydation into heat instead of ATP. Regulates the production of reactive oxygen species/ROS by mitochondria. This chain is Mitochondrial brown fat uncoupling protein 1, found in Ovis aries (Sheep).